Reading from the N-terminus, the 293-residue chain is MIISVPATSANLGPGFDTLGLALDLRNIVKIKKSRFFSISIKGEGANNVRLKGNNLFISIFNEHYRKLVGKTDKFRFTFINKIPLSRGLGSSSAVIVSAIAAAYAMAGVAIPREKLLNLALIYEPHPDNITPAVMGGFNVAVVENNKVYSLKKEIPQSLKAVVVIPNRPISTAHSRTRLPKRFAMSDVVYNVSRSSLLTAAFFSENWEMLRVASMDKLHQDIRMRGLPELFELQKLALQKGALMSTLSGSGSTFFNLCYESKAKELAKVLKDRFAKYQVKILDFDNKGLIIEE.

Position 84 to 94 (84 to 94 (PLSRGLGSSSA)) interacts with ATP.

The protein belongs to the GHMP kinase family. Homoserine kinase subfamily.

It is found in the cytoplasm. The catalysed reaction is L-homoserine + ATP = O-phospho-L-homoserine + ADP + H(+). Its pathway is amino-acid biosynthesis; L-threonine biosynthesis; L-threonine from L-aspartate: step 4/5. Functionally, catalyzes the ATP-dependent phosphorylation of L-homoserine to L-homoserine phosphate. This chain is Homoserine kinase, found in Nitratiruptor sp. (strain SB155-2).